The primary structure comprises 553 residues: Putative transport protein CKO_00031 (553 aa).

The next 5 helical transmembrane spans lie at 4–24, 28–48, 65–85, 95–115, and 158–178; these read IALT…IGNI, GVGF…HFVD, FGLI…FFAS, LFAI…HKIF, and MSYA…MWLM. 2 consecutive RCK C-terminal domains span residues 192–276 and 279–361; these read QHED…VIGQ and DTSL…VVGN. Helical transmembrane passes span 371–391, 393–413, 437–457, 464–484, 493–513, and 533–553; these read MLPV…PLFV, GFPV…ALIL, LGIV…FIDT, LSWI…VGLL, YLTL…LAFA, and LVMF…WGLG.

The protein belongs to the AAE transporter (TC 2.A.81) family. YidE subfamily.

The protein resides in the cell membrane. In Citrobacter koseri (strain ATCC BAA-895 / CDC 4225-83 / SGSC4696), this protein is Putative transport protein CKO_00031.